We begin with the raw amino-acid sequence, 484 residues long: Ureidoglycolate hydrolase (484 aa).

The N-terminal stretch at 1–28 is a signal peptide; that stretch reads MATSAAARFLAALAGAAVLLVLLGGAAG. Mn(2+) is bound by residues His148, Asp159, Glu194, and His262. 2 substrate regions span residues 193–194 and 262–265; these read EE and HIEQ. The interval 284 to 399 is involved in dimerization; the sequence is APASIKVEFE…LSEFKIINQD (116 aa). Positions 298, 348, and 361 each coordinate substrate. The segment at 431–432 is substrate; it reads YH. Position 456 (His456) interacts with Mn(2+). His456 contributes to the substrate binding site.

The protein belongs to the peptidase M20 family. In terms of assembly, homodimer. Mn(2+) serves as cofactor. The cofactor is Ni(2+). Requires Co(2+) as cofactor.

It is found in the endoplasmic reticulum. It catalyses the reaction (S)-ureidoglycolate + H2O + 2 H(+) = glyoxylate + 2 NH4(+) + CO2. Its pathway is nitrogen metabolism; (S)-allantoin degradation; glyoxylate from (S)-ureidoglycolate: step 1/1. Its function is as follows. Involved in the catabolism of purine nucleotides. The sequential activity of AAH, UGLYAH and UAH allows a complete purine breakdown without the intermediate generation of urea. The protein is Ureidoglycolate hydrolase of Oryza sativa subsp. japonica (Rice).